The chain runs to 326 residues: Protein LEG1 homolog (326 aa).

The N-terminal stretch at 1–22 (MKSNKTIFLILLFLINFNSIYS) is a signal peptide. N-linked (GlcNAc...) asparagine glycosylation is found at N58, N85, N165, N226, and N245.

The protein belongs to the LEG1 family.

It is found in the secreted. The protein is Protein LEG1 homolog of Dictyostelium discoideum (Social amoeba).